A 488-amino-acid chain; its full sequence is Glutamyl-tRNA(Gln) amidotransferase subunit A (488 aa).

Catalysis depends on charge relay system residues Lys80 and Ser155. Ser179 acts as the Acyl-ester intermediate in catalysis.

Belongs to the amidase family. GatA subfamily. As to quaternary structure, heterotrimer of A, B and C subunits.

The enzyme catalyses L-glutamyl-tRNA(Gln) + L-glutamine + ATP + H2O = L-glutaminyl-tRNA(Gln) + L-glutamate + ADP + phosphate + H(+). Its function is as follows. Allows the formation of correctly charged Gln-tRNA(Gln) through the transamidation of misacylated Glu-tRNA(Gln) in organisms which lack glutaminyl-tRNA synthetase. The reaction takes place in the presence of glutamine and ATP through an activated gamma-phospho-Glu-tRNA(Gln). In Chloroflexus aggregans (strain MD-66 / DSM 9485), this protein is Glutamyl-tRNA(Gln) amidotransferase subunit A.